Here is a 386-residue protein sequence, read N- to C-terminus: S-adenosylmethionine synthase (386 aa).

His16 is a binding site for ATP. Asp18 contributes to the Mg(2+) binding site. Glu44 is a K(+) binding site. The L-methionine site is built by Glu57 and Gln100. A flexible loop region spans residues 100 to 110 (QSGDIAMGVDE). ATP-binding positions include 165–167 (DAK), Asp240, 246–247 (RK), Ala263, and Lys267. Asp240 provides a ligand contact to L-methionine. Position 271 (Lys271) interacts with L-methionine.

Belongs to the AdoMet synthase family. Homotetramer; dimer of dimers. Mg(2+) serves as cofactor. The cofactor is K(+).

The protein localises to the cytoplasm. The catalysed reaction is L-methionine + ATP + H2O = S-adenosyl-L-methionine + phosphate + diphosphate. It functions in the pathway amino-acid biosynthesis; S-adenosyl-L-methionine biosynthesis; S-adenosyl-L-methionine from L-methionine: step 1/1. In terms of biological role, catalyzes the formation of S-adenosylmethionine (AdoMet) from methionine and ATP. The overall synthetic reaction is composed of two sequential steps, AdoMet formation and the subsequent tripolyphosphate hydrolysis which occurs prior to release of AdoMet from the enzyme. The protein is S-adenosylmethionine synthase of Hahella chejuensis (strain KCTC 2396).